A 415-amino-acid chain; its full sequence is Nacrein-like protein F (415 aa).

N-linked (GlcNAc...) asparagine glycosylation is present at Asn27. The 382-residue stretch at 33–414 folds into the Alpha-carbonic anhydrase domain; the sequence is AGFSYDRSIC…KNKVTVYKSF (382 aa). Zn(2+) contacts are provided by His132, His134, and His157. Residues 201 to 297 form a disordered region; the sequence is DEPDDEECKH…GENGHKHGCR (97 aa). Residues 207–219 show a composition bias toward basic and acidic residues; that stretch reads ECKHILKGHHPDN. Residues 220–289 show a composition bias toward low complexity; the sequence is NENGNGDNGN…NNGENGNNGE (70 aa). 22 repeat units span residues 225–227, 228–230, 231–233, 234–236, 237–239, 240–242, 243–245, 246–248, 249–251, 252–254, 255–257, 258–260, 261–263, 264–266, 267–269, 270–272, 273–275, 276–278, 279–281, 282–284, 285–286, and 288–290. The 22 X 3 AA approximate tandem repeats of G-X-N stretch occupies residues 225–290; that stretch reads GDNGNNGYNG…NGENGNNGEN (66 aa). A substrate-binding site is contributed by 355–356; sequence TT.

This sequence belongs to the alpha-carbonic anhydrase family. As to quaternary structure, homooligomer; disulfide-linked. May also be disulfide-linked to insoluble organic matrix. It depends on Zn(2+) as a cofactor. As to expression, expressed in the mantle.

The protein localises to the secreted. Its subcellular location is the extracellular space. The protein resides in the extracellular matrix. It catalyses the reaction hydrogencarbonate + H(+) = CO2 + H2O. Functionally, acts as a negative regulator for calcification in the shells of mollusks. May function both as a calcium concentrator and as a carbonic anhydrase required for production of carbonate ions, which are assembled to CaCO(3) at mineralization sites. Is important for shell formation in both the calcitic prismatic layer and the aragonitic nacreous layer. Shows inhibitory activity of crystal formation when present in free state but, when attached to the insoluble matrix, may regulate the form and size of aragonite crystal. This Pinctada fucata (Akoya pearl oyster) protein is Nacrein-like protein F.